Here is a 487-residue protein sequence, read N- to C-terminus: Serine/threonine-protein kinase BSK8 (487 aa).

The N-myristoyl glycine moiety is linked to residue Gly-2. Ser-20 is subject to Phosphoserine. Positions 59–325 (ENIVSEHGER…DLEIASHQLL (267 aa)) constitute a Protein kinase domain. Residues 65–73 (HGERAPNVV), Asn-71, Lys-87, and 133–135 (EFM) each bind ATP. Catalysis depends on Asp-181, which acts as the Proton acceptor. ATP contacts are provided by residues 185-186 (YR) and Asn-205. Ser-213 is subject to Phosphoserine.

It belongs to the protein kinase superfamily. Ser/Thr protein kinase family. As to quaternary structure, interacts with ASK7/BIN2, BSK1, BSK5, BSK6 and BSK11. Interacts with BSL2. Post-translationally, phosphorylated by BRI1, ASK7/BIN2 and ASK9/BIL2.

Its subcellular location is the cell membrane. The enzyme catalyses L-seryl-[protein] + ATP = O-phospho-L-seryl-[protein] + ADP + H(+). It carries out the reaction L-threonyl-[protein] + ATP = O-phospho-L-threonyl-[protein] + ADP + H(+). Its function is as follows. Probable serine/threonine kinase that acts as a positive regulator of brassinosteroid (BR) signaling downstream of the receptor kinase BRI1. Functions redundantly with BSK3, BSK4, BSK6 and BSK7. Involved in the regulation of sucrose-phosphate synthase 1 (SPS1) in the context of sucrose resuply after starvation. Activates BSL2, a phosphatase that may dephosphorylate SPS1, leading to the activation of SPS1. This chain is Serine/threonine-protein kinase BSK8, found in Arabidopsis thaliana (Mouse-ear cress).